The following is a 76-amino-acid chain: Acyl carrier protein (76 aa).

The region spanning 1 to 76 is the Carrier domain; that stretch reads MATFDEVKEV…AAVDYIGSKQ (76 aa). The residue at position 36 (Ser-36) is an O-(pantetheine 4'-phosphoryl)serine.

The protein belongs to the acyl carrier protein (ACP) family. 4'-phosphopantetheine is transferred from CoA to a specific serine of apo-ACP by AcpS. This modification is essential for activity because fatty acids are bound in thioester linkage to the sulfhydryl of the prosthetic group.

The protein localises to the cytoplasm. The protein operates within lipid metabolism; fatty acid biosynthesis. Functionally, carrier of the growing fatty acid chain in fatty acid biosynthesis. The chain is Acyl carrier protein from Deinococcus geothermalis (strain DSM 11300 / CIP 105573 / AG-3a).